Reading from the N-terminus, the 109-residue chain is uncharacterized protein (109 aa).

2 helical membrane passes run 18–38 (TTLAWTRTAFALLVNGVLLTL) and 48–68 (AGLIPAGLAGAAASCCYVIAL).

It localises to the cell membrane. This is an uncharacterized protein from Mycobacterium tuberculosis (strain CDC 1551 / Oshkosh).